The following is a 511-amino-acid chain: Maturase K (511 aa).

It belongs to the intron maturase 2 family. MatK subfamily.

The protein resides in the plastid. The protein localises to the chloroplast. Functionally, usually encoded in the trnK tRNA gene intron. Probably assists in splicing its own and other chloroplast group II introns. The protein is Maturase K of Acorus calamus var. americanus (American sweet flag).